A 490-amino-acid chain; its full sequence is 4-hydroxybutyryl-CoA dehydratase/vinylacetyl-CoA-Delta-isomerase (490 aa).

Residues C99 and C103 each contribute to the [4Fe-4S] cluster site. Residues 149–156 (MTDPKGDR) and 188–190 (HQT) contribute to the FAD site. 2 residues coordinate [4Fe-4S] cluster: H292 and C299. FAD contacts are provided by residues H325 and 386–390 (DIAGG).

Homotetramer. Requires FAD as cofactor. [4Fe-4S] cluster serves as cofactor.

It catalyses the reaction 4-hydroxybutanoyl-CoA = (2E)-butenoyl-CoA + H2O. The catalysed reaction is vinylacetyl-CoA = (2E)-butenoyl-CoA. Its function is as follows. Catalyzes the reversible conversion of 4-hydroxybutyryl-CoA to crotonyl-CoA. The mechanism of the reaction seems to go through three steps: (1) the FAD-dependent oxidation of 4-hydroxybutyryl-CoA to 4-hydroxycrotonyl-CoA; (2) the hydroxyl group is substituted by a hydride derived from the now reduced FAD in an SN2' reaction leading to vinylacetyl-CoA; (3) isomerization to yield crotonyl-CoA. The sequence is that of 4-hydroxybutyryl-CoA dehydratase/vinylacetyl-CoA-Delta-isomerase (abfD) from Clostridium aminobutyricum.